The sequence spans 832 residues: Cadherin-like protein 26 (832 aa).

The N-terminal stretch at 1 to 27 (MAMRSGRHPSLLLLLVLLLWLLQVSII) is a signal peptide. At 28-614 (DSVQQETDDL…ELADAEVGLH (587 aa)) the chain is on the extracellular side. 4 Cadherin domains span residues 35 to 165 (DDLT…APQF), 166 to 275 (PEKE…RPAF), 276 to 396 (TQEN…PPAF), and 397 to 500 (HPQS…VPTL). N-linked (GlcNAc...) asparagine glycosylation is found at N81, N85, N171, and N177. A glycan (N-linked (GlcNAc...) asparagine) is linked at N462. The chain crosses the membrane as a helical span at residues 615 to 635 (VGALFPVCAAFVALAVALLFL). The Cytoplasmic segment spans residues 636-832 (LRCYFVLEPK…EIYSESGVPS (197 aa)). The disordered stretch occupies residues 813–832 (SLGSKATPFEEIYSESGVPS).

Homodimer. Component of a cadherin:catenin adhesion complex composed of at least of CDH26, beta-catenin/CTNNB1, alpha-catenin/CTNNA1 and p120 catenin/CTNND1. N-glycosylated. In terms of tissue distribution, expressed by epithelial cells of gastrointestinal tissue.

Its subcellular location is the cell membrane. In terms of biological role, cadherins are calcium-dependent cell adhesion proteins. They preferentially interact with themselves in a homophilic manner in connecting cells; cadherins may thus contribute to the sorting of heterogeneous cell types. Ligand for integrins alpha-E/beta-7, ITGAE:ITGAB7, alpha-4/beta-7, ITGA4:ITGAB7 and alpha-4/beta-1, ITGA4:ITGAB1 through which modulates CD4(+) T cells activation. This is Cadherin-like protein 26 (CDH26) from Homo sapiens (Human).